We begin with the raw amino-acid sequence, 219 residues long: Large ribosomal subunit protein uL1 (219 aa).

It belongs to the universal ribosomal protein uL1 family. As to quaternary structure, part of the 50S ribosomal subunit.

Its function is as follows. Binds directly to 23S rRNA. Probably involved in E site tRNA release. In terms of biological role, protein L1 is also a translational repressor protein, it controls the translation of its operon by binding to its mRNA. The polypeptide is Large ribosomal subunit protein uL1 (Pyrococcus abyssi (strain GE5 / Orsay)).